Here is a 103-residue protein sequence, read N- to C-terminus: Large ribosomal subunit protein bL21 (103 aa).

This sequence belongs to the bacterial ribosomal protein bL21 family. Part of the 50S ribosomal subunit. Contacts protein L20.

This protein binds to 23S rRNA in the presence of protein L20. The sequence is that of Large ribosomal subunit protein bL21 from Legionella pneumophila (strain Paris).